The following is an 826-amino-acid chain: U4/U6 snRNA-associated-splicing factor PRP24 (826 aa).

4 RRM domains span residues 310 to 385, 386 to 463, 477 to 554, and 598 to 670; these read TSVF…EAAG, ITLY…YSDP, REVH…LSVS, and RSFA…AVPQ.

Its subcellular location is the nucleus. Functionally, functions as a recycling factor of the spliceosome, a machinery that forms on each precursor-messenger RNA (pre-mRNA) and catalyzes the removal of introns. Chaperones the re-annealing of U4 and U6 snRNAs (small nuclear RNAs) released from previous rounds of splicing, an initial step in reforming the U4/U6-U5 tri-snRNP (small nuclear ribonucleoprotein) that can reassemble into another spliceosome complex; this step involves binding U6 and facilitating the unwinding of the U6 internal stem loop, followed by base-pairing of U6 to U4. This is U4/U6 snRNA-associated-splicing factor PRP24 from Ophiostoma ulmi (Dutch elm disease fungus).